We begin with the raw amino-acid sequence, 82 residues long: MSDINQNLARRPFNRRRKTCPFSGTNVAKIDYKDIKLLQRYISERGKIVPSRITAVSQKKQRELANAIKRARFLGLLPYVVK.

Belongs to the bacterial ribosomal protein bS18 family. In terms of assembly, part of the 30S ribosomal subunit. Forms a tight heterodimer with protein bS6.

Functionally, binds as a heterodimer with protein bS6 to the central domain of the 16S rRNA, where it helps stabilize the platform of the 30S subunit. The chain is Small ribosomal subunit protein bS18 from Bartonella bacilliformis (strain ATCC 35685 / KC583 / Herrer 020/F12,63).